Here is a 286-residue protein sequence, read N- to C-terminus: Octanoyltransferase (286 aa).

The BPL/LPL catalytic domain occupies 50–278 (LRTPDELWIV…NIAQRHAGVI (229 aa)). Residues 89–96 (RGGQVTWH), 190–192 (SLG), and 203–205 (GVA) contribute to the substrate site. Residue cysteine 221 is the Acyl-thioester intermediate of the active site.

The protein belongs to the LipB family.

It is found in the cytoplasm. The enzyme catalyses octanoyl-[ACP] + L-lysyl-[protein] = N(6)-octanoyl-L-lysyl-[protein] + holo-[ACP] + H(+). Its pathway is protein modification; protein lipoylation via endogenous pathway; protein N(6)-(lipoyl)lysine from octanoyl-[acyl-carrier-protein]: step 1/2. Its function is as follows. Catalyzes the transfer of endogenously produced octanoic acid from octanoyl-acyl-carrier-protein onto the lipoyl domains of lipoate-dependent enzymes. Lipoyl-ACP can also act as a substrate although octanoyl-ACP is likely to be the physiological substrate. This is Octanoyltransferase from Psychrobacter arcticus (strain DSM 17307 / VKM B-2377 / 273-4).